Reading from the N-terminus, the 249-residue chain is tRNA (guanine-N(1)-)-methyltransferase (249 aa).

S-adenosyl-L-methionine contacts are provided by residues Gly-112 and 132-137 (LGDFVL).

Belongs to the RNA methyltransferase TrmD family. In terms of assembly, homodimer.

It localises to the cytoplasm. It carries out the reaction guanosine(37) in tRNA + S-adenosyl-L-methionine = N(1)-methylguanosine(37) in tRNA + S-adenosyl-L-homocysteine + H(+). Its function is as follows. Specifically methylates guanosine-37 in various tRNAs. In Geobacter sp. (strain M21), this protein is tRNA (guanine-N(1)-)-methyltransferase.